The sequence spans 104 residues: Large ribosomal subunit protein bL21 (104 aa).

This sequence belongs to the bacterial ribosomal protein bL21 family. Part of the 50S ribosomal subunit. Contacts protein L20.

This protein binds to 23S rRNA in the presence of protein L20. This is Large ribosomal subunit protein bL21 from Acidiphilium cryptum (strain JF-5).